A 454-amino-acid chain; its full sequence is Glutamyl-tRNA(Gln) amidotransferase subunit A (454 aa).

Residues Lys77 and Ser152 each act as charge relay system in the active site. Catalysis depends on Ser176, which acts as the Acyl-ester intermediate.

This sequence belongs to the amidase family. GatA subfamily. As to quaternary structure, heterotrimer of A, B and C subunits.

The catalysed reaction is L-glutamyl-tRNA(Gln) + L-glutamine + ATP + H2O = L-glutaminyl-tRNA(Gln) + L-glutamate + ADP + phosphate + H(+). Allows the formation of correctly charged Gln-tRNA(Gln) through the transamidation of misacylated Glu-tRNA(Gln) in organisms which lack glutaminyl-tRNA synthetase. The reaction takes place in the presence of glutamine and ATP through an activated gamma-phospho-Glu-tRNA(Gln). The sequence is that of Glutamyl-tRNA(Gln) amidotransferase subunit A (gatA) from Methanothermobacter thermautotrophicus (strain ATCC 29096 / DSM 1053 / JCM 10044 / NBRC 100330 / Delta H) (Methanobacterium thermoautotrophicum).